A 269-amino-acid polypeptide reads, in one-letter code: GTP cyclohydrolase FolE2 1 (269 aa).

The protein belongs to the GTP cyclohydrolase IV family.

It catalyses the reaction GTP + H2O = 7,8-dihydroneopterin 3'-triphosphate + formate + H(+). It participates in cofactor biosynthesis; 7,8-dihydroneopterin triphosphate biosynthesis; 7,8-dihydroneopterin triphosphate from GTP: step 1/1. In terms of biological role, converts GTP to 7,8-dihydroneopterin triphosphate. The protein is GTP cyclohydrolase FolE2 1 of Burkholderia cenocepacia (strain HI2424).